A 273-amino-acid chain; its full sequence is Formamidopyrimidine-DNA glycosylase (273 aa).

Proline 2 functions as the Schiff-base intermediate with DNA in the catalytic mechanism. Glutamate 3 functions as the Proton donor in the catalytic mechanism. The active-site Proton donor; for beta-elimination activity is lysine 58. 3 residues coordinate DNA: histidine 91, arginine 110, and arginine 153. Residues 238-272 form an FPG-type zinc finger; that stretch reads KVYGKEGQPCPRCGEDFVKIKICGRGTTYCLHCQK. Arginine 262 (proton donor; for delta-elimination activity) is an active-site residue.

The protein belongs to the FPG family. In terms of assembly, monomer. Zn(2+) is required as a cofactor.

It catalyses the reaction Hydrolysis of DNA containing ring-opened 7-methylguanine residues, releasing 2,6-diamino-4-hydroxy-5-(N-methyl)formamidopyrimidine.. The catalysed reaction is 2'-deoxyribonucleotide-(2'-deoxyribose 5'-phosphate)-2'-deoxyribonucleotide-DNA = a 3'-end 2'-deoxyribonucleotide-(2,3-dehydro-2,3-deoxyribose 5'-phosphate)-DNA + a 5'-end 5'-phospho-2'-deoxyribonucleoside-DNA + H(+). In terms of biological role, involved in base excision repair of DNA damaged by oxidation or by mutagenic agents. Acts as a DNA glycosylase that recognizes and removes damaged bases. Has a preference for oxidized purines, such as 7,8-dihydro-8-oxoguanine (8-oxoG). Has AP (apurinic/apyrimidinic) lyase activity and introduces nicks in the DNA strand. Cleaves the DNA backbone by beta-delta elimination to generate a single-strand break at the site of the removed base with both 3'- and 5'-phosphates. This is Formamidopyrimidine-DNA glycosylase from Lactobacillus delbrueckii subsp. bulgaricus (strain ATCC BAA-365 / Lb-18).